The chain runs to 389 residues: MYKTKGGFQLTLQTLSLVVGFMAWSIIAPLMPFIKQDVNVTEGQISIILAIPVILGSVLRVPFGYLTNIVGAKWVFFTSFIVLLFPIFFLSQAQTPGMLMASGFFLGVGGAIFSVGVTSVPKYFPKEKVGLANGIYGMGNIGTAVSSFLAPPIAGIIGWQTTVRSYLIIIALFALIMFIFGDTQERKIKVPLMAQMKTLSKNYKLYYLSYWYFITFGAFVAFGIFLPNYLVNHFGIDKVDAGIRSGVFIALATFLRPIGGILGDKFNAVKVLMIDFVVMIIGAIILGISDHIALFTVGCLTISICAGIGNGLIFKLVPSYFSNEAGSANGIVSMMGGLGGFFPPLVITYVANLTGSSHLAFIFLAVFGCIALFTMRHLYQKEYGSLKNG.

12 helical membrane passes run 14–34, 45–65, 69–89, 97–117, 139–159, 161–181, 211–231, 246–266, 268–288, 294–314, 331–351, and 353–373; these read TLSL…MPFI, ISII…PFGY, IVGA…PIFF, GMLM…SVGV, GNIG…IIGW, TTVR…FIFG, WYFI…NYLV, GVFI…GDKF, AVKV…ILGI, LFTV…GLIF, IVSM…TYVA, and LTGS…IALF.

This sequence belongs to the major facilitator superfamily. Nitrate/nitrite porter (TC 2.A.1.8) family.

It is found in the cell membrane. Functionally, probably required for nitrate uptake under anoxic conditions. Also possibly involved in excretion of nitrite produced by the dissimilatory reduction of nitrate. This Staphylococcus aureus (strain bovine RF122 / ET3-1) protein is Probable nitrate transporter NarT (narT).